Consider the following 255-residue polypeptide: Putative SET domain-containing protein L678 (255 aa).

The SET domain maps to 5–176 (NRISEVFIKK…TGEELTDNYV (172 aa)). The tract at residues 235–255 (LQQNSKNLKKNPKKTIKATPK) is disordered.

It belongs to the class V-like SAM-binding methyltransferase superfamily.

This Acanthamoeba polyphaga mimivirus (APMV) protein is Putative SET domain-containing protein L678.